We begin with the raw amino-acid sequence, 237 residues long: Phosphoribosylaminoimidazole-succinocarboxamide synthase (237 aa).

The protein belongs to the SAICAR synthetase family.

It catalyses the reaction 5-amino-1-(5-phospho-D-ribosyl)imidazole-4-carboxylate + L-aspartate + ATP = (2S)-2-[5-amino-1-(5-phospho-beta-D-ribosyl)imidazole-4-carboxamido]succinate + ADP + phosphate + 2 H(+). It functions in the pathway purine metabolism; IMP biosynthesis via de novo pathway; 5-amino-1-(5-phospho-D-ribosyl)imidazole-4-carboxamide from 5-amino-1-(5-phospho-D-ribosyl)imidazole-4-carboxylate: step 1/2. This is Phosphoribosylaminoimidazole-succinocarboxamide synthase from Listeria monocytogenes serotype 4b (strain CLIP80459).